The primary structure comprises 592 residues: Medium-chain-fatty-acid--[acyl-carrier-protein] ligase JamA (592 aa).

Belongs to the ATP-dependent AMP-binding enzyme family.

It carries out the reaction a medium-chain fatty acid + holo-[ACP] + ATP = a medium-chain fatty acyl-[ACP] + AMP + diphosphate. The catalysed reaction is a medium-chain fatty acid + ATP + H(+) = a medium-chain fatty acyl-AMP + diphosphate. It catalyses the reaction a medium-chain fatty acyl-AMP + holo-[ACP] = a medium-chain fatty acyl-[ACP] + AMP + H(+). In terms of biological role, ligase involved in the biosynthesis of jamaicamides, which show sodium channel blocking activity and fish toxicity. Initiates jamaicamide biosynthesis by the activation of the starter unit, 5-hexenoic acid, followed by the loading of the activated 5-hexenoic acid onto the acyl carrier protein JamC. In vitro, can also use 5-hexynoic acid, heptanoic acid, butanoic acid, hexanoic acid and benzoic acid. In Moorena producens (strain JHB), this protein is Medium-chain-fatty-acid--[acyl-carrier-protein] ligase JamA.